Consider the following 255-residue polypeptide: Lipoprotein-releasing system ATP-binding protein LolD 2 (255 aa).

Residues 9–254 form the ABC transporter domain; that stretch reads LEARGIRKSY…SDSAKLETVA (246 aa). Residue 45–52 coordinates ATP; the sequence is GRSGSGKS.

The protein belongs to the ABC transporter superfamily. Lipoprotein translocase (TC 3.A.1.125) family. The complex is composed of two ATP-binding proteins (LolD) and two transmembrane proteins (LolC and LolE).

The protein localises to the cell inner membrane. Its function is as follows. Part of the ABC transporter complex LolCDE involved in the translocation of mature outer membrane-directed lipoproteins, from the inner membrane to the periplasmic chaperone, LolA. Responsible for the formation of the LolA-lipoprotein complex in an ATP-dependent manner. The chain is Lipoprotein-releasing system ATP-binding protein LolD 2 from Rhodopirellula baltica (strain DSM 10527 / NCIMB 13988 / SH1).